Reading from the N-terminus, the 405-residue chain is Aspartic protease (405 aa).

Residues 1-21 (MISDTVIAILAVALVGSTVQA) form the signal peptide. Positions 22–81 (APVDATATSTSGIIAVPISKSAAQLAREADPVVSLDWLKKTKAQAQYKHKQANARLHSKR) are cleaved as a propeptide — removed in mature form. Residues 97 to 402 (WTGPITIGGQ…DVGNARVGFA (306 aa)) enclose the Peptidase A1 domain. The active site involves aspartate 113. A disulfide bond links cysteine 126 and cysteine 131. The active site involves aspartate 290. An intrachain disulfide couples cysteine 332 to cysteine 366.

It belongs to the peptidase A1 family.

The protein localises to the secreted. Its activity is regulated as follows. Inhibited by pepstatin A. Possesses acidic protease activity. Hydrolyzes casein and azoalbumin in vitro. In Phaffia rhodozyma (Yeast), this protein is Aspartic protease.